A 464-amino-acid chain; its full sequence is tRNA modification GTPase MnmE (464 aa).

3 residues coordinate (6S)-5-formyl-5,6,7,8-tetrahydrofolate: Arg-27, Glu-89, and Arg-128. In terms of domain architecture, TrmE-type G spans 225-384; that stretch reads GLATAIIGHP…LEDRIAAMFF (160 aa). Asn-235 serves as a coordination point for K(+). Residues 235-240, 254-260, and 279-282 each bind GTP; these read NVGKSS, TDVAGTT, and DTAG. A Mg(2+)-binding site is contributed by Ser-239. 3 residues coordinate K(+): Thr-254, Val-256, and Thr-259. Thr-260 serves as a coordination point for Mg(2+). Lys-464 provides a ligand contact to (6S)-5-formyl-5,6,7,8-tetrahydrofolate.

It belongs to the TRAFAC class TrmE-Era-EngA-EngB-Septin-like GTPase superfamily. TrmE GTPase family. As to quaternary structure, homodimer. Heterotetramer of two MnmE and two MnmG subunits. Requires K(+) as cofactor.

It is found in the cytoplasm. Its function is as follows. Exhibits a very high intrinsic GTPase hydrolysis rate. Involved in the addition of a carboxymethylaminomethyl (cmnm) group at the wobble position (U34) of certain tRNAs, forming tRNA-cmnm(5)s(2)U34. This Pediococcus pentosaceus (strain ATCC 25745 / CCUG 21536 / LMG 10740 / 183-1w) protein is tRNA modification GTPase MnmE.